Here is a 397-residue protein sequence, read N- to C-terminus: Chorismate synthase (397 aa).

The NADP(+) site is built by Arg40 and Arg46. Residues 129–131 (RSS), 257–258 (QA), Gly302, 317–321 (KPISS), and Arg343 each bind FMN.

The protein belongs to the chorismate synthase family. As to quaternary structure, homotetramer. Requires FMNH2 as cofactor.

The enzyme catalyses 5-O-(1-carboxyvinyl)-3-phosphoshikimate = chorismate + phosphate. It participates in metabolic intermediate biosynthesis; chorismate biosynthesis; chorismate from D-erythrose 4-phosphate and phosphoenolpyruvate: step 7/7. Catalyzes the anti-1,4-elimination of the C-3 phosphate and the C-6 proR hydrogen from 5-enolpyruvylshikimate-3-phosphate (EPSP) to yield chorismate, which is the branch point compound that serves as the starting substrate for the three terminal pathways of aromatic amino acid biosynthesis. This reaction introduces a second double bond into the aromatic ring system. The protein is Chorismate synthase of Chlorobium phaeovibrioides (strain DSM 265 / 1930) (Prosthecochloris vibrioformis (strain DSM 265)).